We begin with the raw amino-acid sequence, 96 residues long: Non-specific lipid-transfer protein 2 (96 aa).

An N-terminal signal peptide occupies residues 1-27 (MMRKLAVLVLAVAMVAACGGGVVGVAG). Intrachain disulfides connect Cys-30–Cys-62, Cys-38–Cys-52, Cys-53–Cys-88, and Cys-64–Cys-95.

Its function is as follows. Transfer lipids across membranes. May play a role in plant defense or in the biosynthesis of cuticle layers. This Oryza sativa subsp. japonica (Rice) protein is Non-specific lipid-transfer protein 2 (LTP-2).